The chain runs to 255 residues: Major prion protein (255 aa).

The signal sequence occupies residues 1 to 24 (MVKSHIGSWILVLFVAMWSDVGLC). The interaction with ADGRG6 stretch occupies residues 25–41 (KKRPKPGGGWNTGGSRY). The segment at 25–232 (KKRPKPGGGW…ESEAYYQRGA (208 aa)) is interaction with GRB2, ERI3 and SYN1. Positions 28 to 110 (PKPGGGWNTG…QWNKPSKPKT (83 aa)) are disordered. 5 consecutive repeat copies span residues 54–62 (PQGGGGWGQ), 63–70 (PHGGGWGQ), 71–78 (PHGGGWGQ), 79–86 (PHGGGWGQ), and 87–94 (PHGGGGWG). The segment at 54 to 94 (PQGGGGWGQPHGGGWGQPHGGGWGQPHGGGWGQPHGGGGWG) is 5 X 8 AA tandem repeats of P-H-G-G-G-W-G-Q. Residues 55-97 (QGGGGWGQPHGGGWGQPHGGGWGQPHGGGWGQPHGGGGWGQGG) show a composition bias toward gly residues. Residues histidine 64, glycine 65, glycine 66, histidine 72, glycine 73, glycine 74, histidine 80, glycine 81, glycine 82, histidine 88, glycine 90, and glycine 91 each coordinate Cu(2+). Asparagine 174, asparagine 184, and asparagine 199 each carry an N-linked (GlcNAc...) asparagine glycan. A disulfide bridge links cysteine 182 with cysteine 216. Alanine 232 carries the GPI-anchor amidated alanine lipid modification. Positions 233–255 (SVILFSSPPVILLVSFLIFLIVG) are cleaved as a propeptide — removed in mature form.

Belongs to the prion family. As to quaternary structure, monomer and homodimer. Has a tendency to aggregate into amyloid fibrils containing a cross-beta spine, formed by a steric zipper of superposed beta-strands. Soluble oligomers may represent an intermediate stage on the path to fibril formation. Copper binding may promote oligomerization. Interacts with GRB2, APP, ERI3/PRNPIP and SYN1. Mislocalized cytosolically exposed PrP interacts with MGRN1; this interaction alters MGRN1 subcellular location and causes lysosomal enlargement. Interacts with APP. Interacts with KIAA1191. Interacts with ADGRG6.

It is found in the cell membrane. Its subcellular location is the golgi apparatus. Functionally, its primary physiological function is unclear. May play a role in neuronal development and synaptic plasticity. May be required for neuronal myelin sheath maintenance. May promote myelin homeostasis through acting as an agonist for ADGRG6 receptor. May play a role in iron uptake and iron homeostasis. Soluble oligomers are toxic to cultured neuroblastoma cells and induce apoptosis (in vitro). Association with GPC1 (via its heparan sulfate chains) targets PRNP to lipid rafts. Also provides Cu(2+) or Zn(2+) for the ascorbate-mediated GPC1 deaminase degradation of its heparan sulfate side chains. The polypeptide is Major prion protein (PRNP) (Canis lupus familiaris (Dog)).